We begin with the raw amino-acid sequence, 110 residues long: U1-lycotoxin-Ls1ii (110 aa).

Residues 1–20 form the signal peptide; it reads MKFVLLFGVLLVTLFSYSSA. A propeptide spanning residues 21–44 is cleaved from the precursor; that stretch reads EMLDDFDQADEDELLSLIEKEEAR. 4 disulfide bridges follow: Cys-47-Cys-62, Cys-54-Cys-71, Cys-61-Cys-89, and Cys-73-Cys-87.

The protein belongs to the neurotoxin 19 (CSTX) family. 03 subfamily. In terms of tissue distribution, expressed by the venom gland.

It is found in the secreted. The polypeptide is U1-lycotoxin-Ls1ii (Lycosa singoriensis (Wolf spider)).